We begin with the raw amino-acid sequence, 213 residues long: 5-deoxy-D-ribulose 1-phosphate aldolase (213 aa).

Substrate-binding positions include 28 to 29 (GN), 45 to 46 (SG), and 74 to 76 (SSE). The active-site Proton donor/acceptor is the Glu76. Mn(2+) is bound by residues Glu76, His95, His97, and His157.

It belongs to the aldolase class II family. As to quaternary structure, forms homooligomers, possibly homotetramers. Mn(2+) serves as cofactor.

It catalyses the reaction 5-deoxy-D-ribulose 1-phosphate = dihydroxyacetone phosphate + acetaldehyde. It participates in carbohydrate degradation. In terms of biological role, catalyzes the cleavage of 5-deoxy-D-ribulose 1-phosphate to yield dihydroxyacetone phosphate (DHAP) and acetaldehyde, as part of a 5-deoxyribose salvage pathway that recycles this toxic radical SAM enzyme by-product to mainstream metabolites. Is also able to catalyze the reverse reaction, using several aldehydes as substrate, with acetaldehyde being the preferred substrate. This Bacillus thuringiensis serovar kurstaki (strain ATCC 35866 / NRRL B-4488 / HD73) protein is 5-deoxy-D-ribulose 1-phosphate aldolase.